The sequence spans 513 residues: DNA damage-binding protein CMR1 (513 aa).

Basic and acidic residues predominate over residues 35–45 (RSEAGIEDHRK). The disordered stretch occupies residues 35-103 (RSEAGIEDHR…TAQNVKQEEE (69 aa)). WD repeat units lie at residues 183-224 (IVHE…PDPE), 237-277 (LFSR…SDEL), 329-369 (LSDK…AKPD), 386-425 (NSRL…PSEL), 438-477 (GRWV…LSHL), and 478-513 (ETST…APQE).

This sequence belongs to the WD repeat DDB2/WDR76 family.

DNA-binding protein that binds to both single- and double-stranded DNA. Binds preferentially to UV-damaged DNA. May be involved in DNA-metabolic processes. The protein is DNA damage-binding protein CMR1 of Eremothecium gossypii (strain ATCC 10895 / CBS 109.51 / FGSC 9923 / NRRL Y-1056) (Yeast).